The chain runs to 756 residues: Centromere protein I (756 aa).

The segment at 1–60 (MSPQKRVKNVQAQNRTSQGSSSFQTTLSAWKVKQDPSNSKNISKHGQNNPVGDYEHADDQ) is disordered. Composition is skewed to polar residues over residues 10–28 (VQAQ…TTLS) and 35–50 (DPSN…QNNP).

It belongs to the CENP-I/CTF3 family. Component of the CENPA-CAD complex, composed of CENPI, CENPK, CENPL, CENPO, CENPP, CENPQ, CENPR and CENPS. The CENPA-CAD complex interacts with the CENPA-NAC complex, at least composed of CENPA, CENPC, CENPH, CENPM, CENPN, CENPT and CENPU. Interacts with SENP6. Sumoylated. Sumoylated form can be polyubiquitinated by RNF4, leading to its degradation. Desumoylation by SENP6 prevents its degradation.

It is found in the nucleus. The protein localises to the chromosome. It localises to the centromere. In terms of biological role, component of the CENPA-CAD (nucleosome distal) complex, a complex recruited to centromeres which is involved in assembly of kinetochore proteins, mitotic progression and chromosome segregation. May be involved in incorporation of newly synthesized CENPA into centromeres via its interaction with the CENPA-NAC complex. Required for the localization of CENPF, MAD1L1 and MAD2 (MAD2L1 or MAD2L2) to kinetochores. Involved in the response of gonadal tissues to follicle-stimulating hormone. This is Centromere protein I (CENPI) from Homo sapiens (Human).